The following is a 403-amino-acid chain: Arginine deiminase (403 aa).

Cys388 functions as the Amidino-cysteine intermediate in the catalytic mechanism.

Belongs to the arginine deiminase family.

Its subcellular location is the cytoplasm. The catalysed reaction is L-arginine + H2O = L-citrulline + NH4(+). It functions in the pathway amino-acid degradation; L-arginine degradation via ADI pathway; carbamoyl phosphate from L-arginine: step 1/2. This chain is Arginine deiminase, found in Mycoplasma capricolum subsp. capricolum (strain California kid / ATCC 27343 / NCTC 10154).